Here is a 278-residue protein sequence, read N- to C-terminus: Glycerophosphodiester phosphodiesterase GpdQ (278 aa).

Asp8, His10, Asp50, Asn80, His156, His195, and His197 together coordinate Fe cation.

This sequence belongs to the cyclic nucleotide phosphodiesterase class-III family. The cofactor is Fe(2+).

The catalysed reaction is a sn-glycero-3-phosphodiester + H2O = an alcohol + sn-glycerol 3-phosphate + H(+). It catalyses the reaction sn-glycero-3-phosphoethanolamine + H2O = ethanolamine + sn-glycerol 3-phosphate + H(+). In terms of biological role, catalyzes the hydrolysis of the 3'-5' phosphodiester bond of glycerophosphodiesters such as glycerophosphorylethanolamine (GPE), a typical phospholipid metabolite. This is Glycerophosphodiester phosphodiesterase GpdQ from Enterobacter lignolyticus (strain SCF1).